Here is a 436-residue protein sequence, read N- to C-terminus: UPF0597 protein YhaM (436 aa).

It belongs to the UPF0597 family.

The polypeptide is UPF0597 protein YhaM (Salmonella paratyphi B (strain ATCC BAA-1250 / SPB7)).